We begin with the raw amino-acid sequence, 392 residues long: Immunoglobulin-binding protein EibA (392 aa).

A signal peptide spans 1-27 (MSKKFTKAVLSAAMAGVLFGVSFDIMA). A surface exposed passenger domain region spans residues 28 to 301 (AEQSYSALNA…IAANTRTLQQ (274 aa)). The Extracellular portion of the chain corresponds to 28-341 (AEQSYSALNA…GLFQPYSVGK (314 aa)). Residues 174-215 (ESANSTIVANELEAQKGKLDAQKGELEAQKKNLGELTTRTDK) are a coiled coil. A right-handed coiled-coil (RHcc) region spans residues 187–230 (AQKGKLDAQKGELEAQKKNLGELTTRTDKIDAAAAATAAKVESR). A saddle domain region spans residues 231 to 256 (TLVGVSSDGTLTRAEGAKNTISVNDG). A left-handed coiled-coil (LHcc) region spans residues 257–322 (LVALSGRTDR…INENHKEMKR (66 aa)). Residues 299-341 (LQQHSARLDSQQRQINENHKEMKRAAAQSAALTGLFQPYSVGK) are outer membrane translocation of the passenger domain. 4 beta stranded membrane-spanning segments follow: residues 342 to 352 (FNASAAVGGYS), 355 to 366 (QALAVGVGYRFN), 369 to 378 (TAAKAGVAFS), and 382 to 392 (ASWNVGVNFEF). A translocator domain region spans residues 342–392 (FNASAAVGGYSDEQALAVGVGYRFNEQTAAKAGVAFSDGDASWNVGVNFEF).

This sequence belongs to the autotransporter-2 (AT-2) (TC 1.B.40) family. Eib subfamily. As to quaternary structure, homotrimer; can probably form mixed heterotrimers in vivo. Will form mixed heterotrimers with EibD; these are correctly located in the outer membrane and bind IgG Fc, although less well than homotrimers. Does not form trimers with distantly related YadA from Y.enterocolitica; coexpression was lethal and one of the genes is eliminated in vivo. If the full translocator domain (299-392) is exchanged with that of YadA ('368-455'), will form heterotrimers with YadA and vice-versa. In denaturing gels runs as 2 bands of about 121 and 131 kDa; extracting the sample with 88% phenol at 70 degrees Celsius reduces part of the signal to about 45 kDa. Binds the Fc portion of IgG; binds more than 1 Fc per subunit.

It localises to the cell surface. It is found in the cell outer membrane. Functionally, binds (in a non-immune fashion) to the Fc portion of human IgG but not IgA; binding occurs on the cell surface. Confers the ability to survive exposure to human serum exposure. Binds to the Fc portion of human IgG and to whole mouse antibodies also via Fc, binds more than 1 Fc or IgG. The protein is Immunoglobulin-binding protein EibA of Escherichia coli.